A 36-amino-acid polypeptide reads, in one-letter code: Thrombin-like enzyme TLP (36 aa).

Residues 1-36 form the Peptidase S1 domain; it reads IGGFECNEHEHRSLVYLYNSAGFFCAGTLLNHEWVV.

It belongs to the peptidase S1 family. Snake venom subfamily. As to quaternary structure, monomer. As to expression, expressed by the venom gland.

Its subcellular location is the secreted. In terms of biological role, thrombin-like snake venom serine protease. Shows strong hydrolytic activity towards Boc-Asp(oBzl)-Pro-Arg-MCA, a synthetic substrate for thrombin. The polypeptide is Thrombin-like enzyme TLP (Naja naja (Indian cobra)).